Here is a 1200-residue protein sequence, read N- to C-terminus: Nuclear pore complex protein Nup133 (1200 aa).

Residues 1–28 (MERNLQKQLYGISRESSPGARRYSMPAA) form a disordered region.

This sequence belongs to the nucleoporin Nup133 family. As to quaternary structure, forms part of the Nup107-Nup160 subcomplex in the nuclear pore.

It localises to the nucleus. It is found in the nuclear pore complex. Its function is as follows. Probable component of the nuclear pore complex (NPC). Plays a role in NPC assembly and/or maintenance. This is Nuclear pore complex protein Nup133 from Drosophila melanogaster (Fruit fly).